The following is a 456-amino-acid chain: Probable glycine dehydrogenase (decarboxylating) subunit 1 (456 aa).

It belongs to the GcvP family. N-terminal subunit subfamily. As to quaternary structure, the glycine cleavage system is composed of four proteins: P, T, L and H. In this organism, the P 'protein' is a heterodimer of two subunits.

It catalyses the reaction N(6)-[(R)-lipoyl]-L-lysyl-[glycine-cleavage complex H protein] + glycine + H(+) = N(6)-[(R)-S(8)-aminomethyldihydrolipoyl]-L-lysyl-[glycine-cleavage complex H protein] + CO2. Functionally, the glycine cleavage system catalyzes the degradation of glycine. The P protein binds the alpha-amino group of glycine through its pyridoxal phosphate cofactor; CO(2) is released and the remaining methylamine moiety is then transferred to the lipoamide cofactor of the H protein. The polypeptide is Probable glycine dehydrogenase (decarboxylating) subunit 1 (Legionella pneumophila subsp. pneumophila (strain Philadelphia 1 / ATCC 33152 / DSM 7513)).